The chain runs to 436 residues: GTPase Der (436 aa).

2 EngA-type G domains span residues 4–167 (PVIA…PKIE) and 176–351 (IRFS…ESHS). Residues 10-17 (GRPNVGKS), 57-61 (DTGGI), 119-122 (NKVD), 182-189 (GRPNVGKS), 229-233 (DTAGM), and 294-297 (NKWD) contribute to the GTP site. The KH-like domain occupies 352–436 (IRIQTNVLND…PIHIIARARD (85 aa)).

It belongs to the TRAFAC class TrmE-Era-EngA-EngB-Septin-like GTPase superfamily. EngA (Der) GTPase family. As to quaternary structure, associates with the 50S ribosomal subunit.

GTPase that plays an essential role in the late steps of ribosome biogenesis. This is GTPase Der from Bacillus anthracis (strain A0248).